A 415-amino-acid chain; its full sequence is 26S proteasome regulatory subunit 6B (415 aa).

An ATP-binding site is contributed by 203 to 210 (GPPGCGKT).

This sequence belongs to the AAA ATPase family.

The protein localises to the cytoplasm. The protein resides in the nucleus. Its function is as follows. The 26S proteasome is involved in the ATP-dependent degradation of ubiquitinated proteins. The regulatory (or ATPase) complex confers ATP dependency and substrate specificity to the 26S complex. The polypeptide is 26S proteasome regulatory subunit 6B (Manduca sexta (Tobacco hawkmoth)).